The sequence spans 129 residues: Succinate dehydrogenase cytochrome b556 subunit (129 aa).

The Cytoplasmic segment spans residues 1–26; the sequence is MIRNVKKQRPVNLDLQTIRFPITAIA. A helical membrane pass occupies residues 27 to 52; sequence SILHRVSGVITFVAVGILLWLLGTSL. At 53–68 the chain is on the periplasmic side; that stretch reads SSPEGFEQASAIMGSF. A helical transmembrane segment spans residues 69–89; it reads FVKFIMWGILTALAYHVVVGI. Position 84 (H84) interacts with heme. The Cytoplasmic portion of the chain corresponds to 90–108; sequence RHMMMDFGYLEETFEAGKR. Residues 109–129 traverse the membrane as a helical segment; that stretch reads SAKISFVITVVLSLLAGVLVW.

The protein belongs to the cytochrome b560 family. As to quaternary structure, part of an enzyme complex containing four subunits: a flavoprotein, an iron-sulfur protein, plus two membrane-anchoring proteins, SdhC and SdhD. The complex can form homotrimers. Heme is required as a cofactor.

It localises to the cell inner membrane. It functions in the pathway carbohydrate metabolism; tricarboxylic acid cycle. Functionally, membrane-anchoring subunit of succinate dehydrogenase (SDH). This is Succinate dehydrogenase cytochrome b556 subunit (sdhC) from Escherichia coli O157:H7.